Consider the following 530-residue polypeptide: ATP synthase subunit alpha 3 (530 aa).

Position 174-181 (174-181 (GDRATGKT)) interacts with ATP. A compositionally biased stretch (low complexity) spans 507 to 522 (TASATAPPDPPAASAA). The disordered stretch occupies residues 507-530 (TASATAPPDPPAASAAELPQPDSP).

Belongs to the ATPase alpha/beta chains family. In terms of assembly, F-type ATPases have 2 components, CF(1) - the catalytic core - and CF(0) - the membrane proton channel. CF(1) has five subunits: alpha(3), beta(3), gamma(1), delta(1), epsilon(1). CF(0) has three main subunits: a(1), b(2) and c(9-12). The alpha and beta chains form an alternating ring which encloses part of the gamma chain. CF(1) is attached to CF(0) by a central stalk formed by the gamma and epsilon chains, while a peripheral stalk is formed by the delta and b chains.

It localises to the cell inner membrane. It catalyses the reaction ATP + H2O + 4 H(+)(in) = ADP + phosphate + 5 H(+)(out). Functionally, produces ATP from ADP in the presence of a proton gradient across the membrane. The alpha chain is a regulatory subunit. The protein is ATP synthase subunit alpha 3 of Paraburkholderia xenovorans (strain LB400).